The primary structure comprises 364 residues: tRNA 2-selenouridine synthase (364 aa).

Residues 14 to 137 (LIADTPIIDV…LRQTAIQATI (124 aa)) form the Rhodanese domain. The S-selanylcysteine intermediate role is filled by Cys-97.

Belongs to the SelU family. Monomer.

It catalyses the reaction 5-methylaminomethyl-2-thiouridine(34) in tRNA + selenophosphate + (2E)-geranyl diphosphate + H2O + H(+) = 5-methylaminomethyl-2-selenouridine(34) in tRNA + (2E)-thiogeraniol + phosphate + diphosphate. The enzyme catalyses 5-methylaminomethyl-2-thiouridine(34) in tRNA + (2E)-geranyl diphosphate = 5-methylaminomethyl-S-(2E)-geranyl-thiouridine(34) in tRNA + diphosphate. The catalysed reaction is 5-methylaminomethyl-S-(2E)-geranyl-thiouridine(34) in tRNA + selenophosphate + H(+) = 5-methylaminomethyl-2-(Se-phospho)selenouridine(34) in tRNA + (2E)-thiogeraniol. It carries out the reaction 5-methylaminomethyl-2-(Se-phospho)selenouridine(34) in tRNA + H2O = 5-methylaminomethyl-2-selenouridine(34) in tRNA + phosphate. Involved in the post-transcriptional modification of the uridine at the wobble position (U34) of tRNA(Lys), tRNA(Glu) and tRNA(Gln). Catalyzes the conversion of 2-thiouridine (S2U-RNA) to 2-selenouridine (Se2U-RNA). Acts in a two-step process involving geranylation of 2-thiouridine (S2U) to S-geranyl-2-thiouridine (geS2U) and subsequent selenation of the latter derivative to 2-selenouridine (Se2U) in the tRNA chain. In Escherichia coli (strain ATCC 8739 / DSM 1576 / NBRC 3972 / NCIMB 8545 / WDCM 00012 / Crooks), this protein is tRNA 2-selenouridine synthase.